The primary structure comprises 908 residues: Zinc finger CCCH domain-containing protein 41 (908 aa).

A compositionally biased stretch (polar residues) spans 1-13; sequence MELSVSSPKQSVL. The interval 1 to 124 is disordered; it reads MELSVSSPKQ…GRGNYGSWAQ (124 aa). Residues 20–34 are compositionally biased toward acidic residues; sequence SDPEEEHEISEEEDD. Polar residues-rich tracts occupy residues 48–59 and 90–105; these read SQSLEQDSSDQA and GQRVQFDNQRMRSNPM. A C3H1-type zinc finger spans residues 200-228; sequence GIPRQRCRDFEERGFCLRGDMCPMEHGMN. Residues 333–375 form a disordered region; the sequence is NVAPLDDSNQDAAENGCGIRDSRSTSQSVWGRMKGSNSQANSK. Positions 356-373 are enriched in polar residues; that stretch reads STSQSVWGRMKGSNSQAN. One can recognise an RRM domain in the interval 438–510; it reads RTLFVNYVPH…RFIKLWWANR (73 aa). 3 disordered regions span residues 558-590, 629-695, and 807-908; these read PTFQTGGAPSSSEQPKPVVVTTSGPKVTPLQQK, VVKR…KQRP, and RESN…QIHQ. Over residues 559–588 the composition is skewed to polar residues; that stretch reads TFQTGGAPSSSEQPKPVVVTTSGPKVTPLQ. Residues 587-630 adopt a coiled-coil conformation; it reads LQQKKADTLERLKETLRKKQEMLEQKRNEYRKKLATLEKQGTVV. The span at 630 to 647 shows a compositional bias: basic and acidic residues; that stretch reads VKREEADEPDAKRVKLDT. Serine 657 bears the Phosphoserine mark. Positions 677–688 are enriched in polar residues; that stretch reads AKLSTETPSPDS. The segment covering 807–828 has biased composition (low complexity); sequence RESNNNNNNSNSLSVSRDNLSS. The segment covering 846–863 has biased composition (polar residues); that stretch reads KTSSTEEPENTNVSGDND. Positions 865-886 are enriched in basic and acidic residues; sequence TLDKQETKESDNDNNKSNHESI. Positions 898-908 are enriched in acidic residues; sequence TDEEQSEQIHQ.

The sequence is that of Zinc finger CCCH domain-containing protein 41 from Arabidopsis thaliana (Mouse-ear cress).